The chain runs to 929 residues: Bifunctional glutamine synthetase adenylyltransferase/adenylyl-removing enzyme (929 aa).

The adenylyl removase stretch occupies residues 1–422 (MTTPISTSRA…TRHFEQIFAV (422 aa)). Residues 429 to 929 (LGTFARIRPE…FQLWEDVFGT (501 aa)) form an adenylyl transferase region.

It belongs to the GlnE family. Mg(2+) is required as a cofactor.

It catalyses the reaction [glutamine synthetase]-O(4)-(5'-adenylyl)-L-tyrosine + phosphate = [glutamine synthetase]-L-tyrosine + ADP. The enzyme catalyses [glutamine synthetase]-L-tyrosine + ATP = [glutamine synthetase]-O(4)-(5'-adenylyl)-L-tyrosine + diphosphate. Involved in the regulation of glutamine synthetase GlnA, a key enzyme in the process to assimilate ammonia. When cellular nitrogen levels are high, the C-terminal adenylyl transferase (AT) inactivates GlnA by covalent transfer of an adenylyl group from ATP to specific tyrosine residue of GlnA, thus reducing its activity. Conversely, when nitrogen levels are low, the N-terminal adenylyl removase (AR) activates GlnA by removing the adenylyl group by phosphorolysis, increasing its activity. The regulatory region of GlnE binds the signal transduction protein PII (GlnB) which indicates the nitrogen status of the cell. In Nitrosomonas eutropha (strain DSM 101675 / C91 / Nm57), this protein is Bifunctional glutamine synthetase adenylyltransferase/adenylyl-removing enzyme.